Reading from the N-terminus, the 424-residue chain is Glutamyl-tRNA reductase (424 aa).

Substrate-binding positions include 49 to 52 (TCNR), Ser-107, 112 to 114 (EPQ), and Gln-118. Residue Cys-50 is the Nucleophile of the active site. NADP(+) is bound at residue 187–192 (GAGETI).

It belongs to the glutamyl-tRNA reductase family. As to quaternary structure, homodimer.

It catalyses the reaction (S)-4-amino-5-oxopentanoate + tRNA(Glu) + NADP(+) = L-glutamyl-tRNA(Glu) + NADPH + H(+). It functions in the pathway porphyrin-containing compound metabolism; protoporphyrin-IX biosynthesis; 5-aminolevulinate from L-glutamyl-tRNA(Glu): step 1/2. Functionally, catalyzes the NADPH-dependent reduction of glutamyl-tRNA(Glu) to glutamate 1-semialdehyde (GSA). This is Glutamyl-tRNA reductase from Pseudomonas fluorescens (strain ATCC BAA-477 / NRRL B-23932 / Pf-5).